A 265-amino-acid polypeptide reads, in one-letter code: Phosphatidylserine decarboxylase proenzyme (265 aa).

The Schiff-base intermediate with substrate; via pyruvic acid role is filled by Ser-183. At Ser-183 the chain carries Pyruvic acid (Ser); by autocatalysis. The segment at 218–242 (PQIESEPESEPALQTAPVETAANPS) is disordered.

This sequence belongs to the phosphatidylserine decarboxylase family. PSD-A subfamily. In terms of assembly, heterodimer of a large membrane-associated beta subunit and a small pyruvoyl-containing alpha subunit. Pyruvate serves as cofactor. Post-translationally, is synthesized initially as an inactive proenzyme. Formation of the active enzyme involves a self-maturation process in which the active site pyruvoyl group is generated from an internal serine residue via an autocatalytic post-translational modification. Two non-identical subunits are generated from the proenzyme in this reaction, and the pyruvate is formed at the N-terminus of the alpha chain, which is derived from the carboxyl end of the proenzyme. The post-translation cleavage follows an unusual pathway, termed non-hydrolytic serinolysis, in which the side chain hydroxyl group of the serine supplies its oxygen atom to form the C-terminus of the beta chain, while the remainder of the serine residue undergoes an oxidative deamination to produce ammonia and the pyruvoyl prosthetic group on the alpha chain.

The protein localises to the cell membrane. It catalyses the reaction a 1,2-diacyl-sn-glycero-3-phospho-L-serine + H(+) = a 1,2-diacyl-sn-glycero-3-phosphoethanolamine + CO2. The protein operates within phospholipid metabolism; phosphatidylethanolamine biosynthesis; phosphatidylethanolamine from CDP-diacylglycerol: step 2/2. Catalyzes the formation of phosphatidylethanolamine (PtdEtn) from phosphatidylserine (PtdSer). The polypeptide is Phosphatidylserine decarboxylase proenzyme (Neisseria meningitidis serogroup C (strain 053442)).